We begin with the raw amino-acid sequence, 1185 residues long: ELMO domain-containing protein F (1185 aa).

Disordered stretches follow at residues 88-133, 176-196, 361-409, 566-628, 642-805, 819-868, 883-989, and 1044-1114; these read QPSP…GNNN, ISTNPNNNSNNNNNNNNNTAE, NNNS…VENE, KSTD…NTKS, ETER…KSSG, LGEK…PYII, DLDF…TQVT, and QKQK…KPVL. Composition is skewed to low complexity over residues 94–127, 176–194, 361–406, and 587–613; these read STIHNNSSTSINQSSSPSSSSSTTPSSSTQSSPI, ISTNPNNNSNNNNNNNNNT, NNNS…NNNV, and PQSQQQSQQQTQQTQQPASPLQTSSSS. Residues 275-488 form the ELMO domain; that stretch reads DRQNVLSFLN…KTRAVLSRIK (214 aa). Polar residues predominate over residues 648–665; sequence SLTGSNGITDGGDSNPNS. Positions 688-699 are enriched in low complexity; sequence SENGSSSSFSFE. Polar residues predominate over residues 721-732; the sequence is FNSLTGELTMNI. Low complexity-rich tracts occupy residues 733 to 760 and 767 to 780; these read SSSSSLEGNQQQQQQQSTNSSTTSPNVS and TTTTTNTTTATTTT. Residues 781-790 show a composition bias toward polar residues; it reads DDQSQQQVPP. Positions 829–841 are enriched in basic residues; it reads KVKSKKEKKKKSK. Composition is skewed to low complexity over residues 853 to 864, 912 to 974, 1053 to 1072, and 1096 to 1109; these read NNSANNSSYNNS, SSSN…QQPQ, DENQNQNNNNNKLSDNSSNE, and GRNSTLNSGSSSLS.

This Dictyostelium discoideum (Social amoeba) protein is ELMO domain-containing protein F (elmoF).